The following is a 147-amino-acid chain: Auxin-responsive protein SAUR41 (147 aa).

This sequence belongs to the ARG7 family. In terms of tissue distribution, specifically expressed in the quiescent center and cortex or endodermis initials of root stem niches. Expressed in vascular tissues from hypocotyls, petioles and cotyledons.

It is found in the cytoplasm. Its function is as follows. Plays a role in the regulation of cell expansion, root meristem patterning and auxin transport. The sequence is that of Auxin-responsive protein SAUR41 from Arabidopsis thaliana (Mouse-ear cress).